The following is a 256-amino-acid chain: Cytokine-inducible SH2-containing protein (256 aa).

The SH2 domain maps to 81–162 (WYWGSITASE…PDVVSLVQHY (82 aa)). Residues 168 to 190 (ADTRSDSPDPAPTPALPVSKPDA) form a disordered region. Residues 207–255 (KLVQPFVRRSSARSLQHLCRLVINRLVTDVDCLPLPRRMADYLRQYPFQ) form the SOCS box domain.

Stably associated with the tyrosine-phosphorylated IL3 receptor beta chain and tyrosine-phosphorylated EPO receptor (EPOR).

Its pathway is protein modification; protein ubiquitination. SOCS family proteins form part of a classical negative feedback system that regulates cytokine signal transduction. CIS is involved in the negative regulation of cytokines that signal through the JAK-STAT5 pathway such as erythropoietin, prolactin and interleukin 3 (IL3) receptor. Inhibits STAT5 trans-activation by suppressing its tyrosine phosphorylation. May be a substrate recognition component of a SCF-like ECS (Elongin BC-CUL2/5-SOCS-box protein) E3 ubiquitin-protein ligase complex which mediates the ubiquitination and subsequent proteasomal degradation of target proteins. This is Cytokine-inducible SH2-containing protein (Cish) from Rattus norvegicus (Rat).